A 769-amino-acid polypeptide reads, in one-letter code: 5-methyltetrahydropteroyltriglutamate--homocysteine methyltransferase (769 aa).

5-methyltetrahydropteroyltri-L-glutamate-binding positions include 16 to 19 (RELK) and lysine 118. L-homocysteine is bound by residues 440-442 (IGS) and glutamate 493. Residues 440–442 (IGS) and glutamate 493 contribute to the L-methionine site. Residues 524–525 (RC) and tryptophan 570 contribute to the 5-methyltetrahydropteroyltri-L-glutamate site. Aspartate 608 is an L-homocysteine binding site. Aspartate 608 lines the L-methionine pocket. Glutamate 614 serves as a coordination point for 5-methyltetrahydropteroyltri-L-glutamate. Histidine 650, cysteine 652, and glutamate 674 together coordinate Zn(2+). Catalysis depends on histidine 706, which acts as the Proton donor. Cysteine 738 is a Zn(2+) binding site.

Belongs to the vitamin-B12 independent methionine synthase family. Zn(2+) is required as a cofactor.

It catalyses the reaction 5-methyltetrahydropteroyltri-L-glutamate + L-homocysteine = tetrahydropteroyltri-L-glutamate + L-methionine. The protein operates within amino-acid biosynthesis; L-methionine biosynthesis via de novo pathway; L-methionine from L-homocysteine (MetE route): step 1/1. Catalyzes the transfer of a methyl group from 5-methyltetrahydrofolate to homocysteine resulting in methionine formation. The polypeptide is 5-methyltetrahydropteroyltriglutamate--homocysteine methyltransferase (Acidiphilium cryptum (strain JF-5)).